The sequence spans 652 residues: DNA ligase (652 aa).

Residues 29-33, 78-79, and Glu107 contribute to the NAD(+) site; these read DSDYD and SL. The active-site N6-AMP-lysine intermediate is Lys109. Arg130, Glu164, Lys278, and Lys302 together coordinate NAD(+). Positions 395, 398, 413, and 418 each coordinate Zn(2+). Residues 577–652 form the BRCT domain; that stretch reads NSDAALFGLT…IEDEDWLRQL (76 aa).

It belongs to the NAD-dependent DNA ligase family. LigA subfamily. The cofactor is Mg(2+). It depends on Mn(2+) as a cofactor.

The enzyme catalyses NAD(+) + (deoxyribonucleotide)n-3'-hydroxyl + 5'-phospho-(deoxyribonucleotide)m = (deoxyribonucleotide)n+m + AMP + beta-nicotinamide D-nucleotide.. Its function is as follows. DNA ligase that catalyzes the formation of phosphodiester linkages between 5'-phosphoryl and 3'-hydroxyl groups in double-stranded DNA using NAD as a coenzyme and as the energy source for the reaction. It is essential for DNA replication and repair of damaged DNA. The chain is DNA ligase from Streptococcus pyogenes serotype M1.